An 859-amino-acid polypeptide reads, in one-letter code: Active breakpoint cluster region-related protein (859 aa).

Residues 27–84 (DDYDAEGNEEQKGPPEGSETMPYIDESPTMSPQLSARSQGGGDSISPTPPEGLAPGVE) form a disordered region. The segment covering 54–64 (PTMSPQLSARS) has biased composition (polar residues). At S57 the chain carries Phosphoserine. Residues 91–284 (MRKLVLSGFL…QNFLSSINED (194 aa)) enclose the DH domain. In terms of domain architecture, PH spans 301–459 (QLVKDGFLVE…WREAIQKLQK (159 aa)). Residues 484 to 613 (TVHNIPVTSN…ETKNWHTDVI (130 aa)) enclose the C2 domain. The Rho-GAP domain maps to 647–845 (VKISVVTKRE…YYLQHPPISF (199 aa)).

Interacts with DLG4.

The protein resides in the cell projection. The protein localises to the dendritic spine. It localises to the axon. Its subcellular location is the synapse. Its function is as follows. Protein with a unique structure having two opposing regulatory activities toward small GTP-binding proteins. The C-terminus is a GTPase-activating protein domain which stimulates GTP hydrolysis by RAC1, RAC2 and CDC42. Accelerates the intrinsic rate of GTP hydrolysis of RAC1 or CDC42, leading to down-regulation of the active GTP-bound form. The central Dbl homology (DH) domain functions as guanine nucleotide exchange factor (GEF) that modulates the GTPases CDC42, RHOA and RAC1. Promotes the conversion of CDC42, RHOA and RAC1 from the GDP-bound to the GTP-bound form. Functions as an important negative regulator of neuronal RAC1 activity. Regulates macrophage functions such as CSF1-directed motility and phagocytosis through the modulation of RAC1 activity. This is Active breakpoint cluster region-related protein (ABR) from Bos taurus (Bovine).